Reading from the N-terminus, the 85-residue chain is Putative transmembrane protein ORF85 (85 aa).

A run of 2 helical transmembrane segments spans residues 12 to 32 (FPPT…KFLS) and 44 to 64 (LGII…GAGI).

The protein localises to the host membrane. This Acidianus convivator (ABV) protein is Putative transmembrane protein ORF85.